Reading from the N-terminus, the 1449-residue chain is ABC transporter G family member 21 (1449 aa).

The segment covering 1 to 10 has biased composition (basic and acidic residues); sequence MEEYELREIA. The tract at residues 1–49 is disordered; sequence MEEYELREIALQEGGSNLDINTPPNYDNPVGDGSSPPDSPDIQKSENQF. The segment covering 14 to 25 has biased composition (polar residues); that stretch reads GGSNLDINTPPN. The region spanning 130 to 383 is the ABC transporter 1 domain; the sequence is ISFFNLFKPS…FIDLGFDCEP (254 aa). One can recognise an ABC transmembrane type-2 1 domain in the interval 488–731; that stretch reads WGDKFSLISR…ILSVEGKDYL (244 aa). A run of 5 helical transmembrane segments spans residues 519-539, 577-597, 602-622, 634-654, and 747-767; these read IPGL…NAFL, IPLT…MFGL, GKFF…TNLF, ISQN…GYTI, and FITY…MEYF. Residues 818–1062 enclose the ABC transporter 2 domain; the sequence is FTWQNINYTV…LTSYFERYGV (245 aa). 854 to 861 contributes to the ATP binding site; it reads GSSGAGKT. An ABC transmembrane type-2 2 domain is found at 1152-1386; it reads FYTYGSFIQS…PISEPLTGYV (235 aa). Helical transmembrane passes span 1155 to 1175, 1188 to 1208, 1228 to 1248, 1266 to 1286, 1296 to 1316, and 1423 to 1443; these read YGSF…FWSL, FIFE…PQFI, FAIS…TIFF, FYFW…GQAV, AHTL…VMVI, and LALI…FVYI.

It belongs to the ABC transporter superfamily. ABCG family. PDR (TC 3.A.1.205) subfamily.

Its subcellular location is the membrane. The sequence is that of ABC transporter G family member 21 (abcG21) from Dictyostelium discoideum (Social amoeba).